A 510-amino-acid chain; its full sequence is Guanosine import ATP-binding protein NupO (510 aa).

2 ABC transporter domains span residues 5 to 240 (IEML…VGRE) and 257 to 501 (LAID…AGST). 37 to 44 (GENGAGKS) contributes to the ATP binding site.

Belongs to the ABC transporter superfamily. In terms of assembly, the complex is composed of two ATP-binding proteins (NupO), two transmembrane proteins (NupP and NupQ) and a solute-binding protein (NupN).

Its subcellular location is the cell membrane. Part of an ABC transporter complex involved in the uptake of guanosine. Responsible for energy coupling to the transport system. May be a nucleoside transporter of broad specificity but with various affinities for different substrates. The polypeptide is Guanosine import ATP-binding protein NupO (Bacillus subtilis (strain 168)).